Consider the following 177-residue polypeptide: Large ribosomal subunit protein uL5 (177 aa).

This sequence belongs to the universal ribosomal protein uL5 family. Part of the 50S ribosomal subunit; part of the 5S rRNA/L5/L18/L25 subcomplex. Contacts the 5S rRNA and the P site tRNA. Forms a bridge to the 30S subunit in the 70S ribosome.

This is one of the proteins that bind and probably mediate the attachment of the 5S RNA into the large ribosomal subunit, where it forms part of the central protuberance. In the 70S ribosome it contacts protein S13 of the 30S subunit (bridge B1b), connecting the 2 subunits; this bridge is implicated in subunit movement. Contacts the P site tRNA; the 5S rRNA and some of its associated proteins might help stabilize positioning of ribosome-bound tRNAs. This Ehrlichia ruminantium (strain Welgevonden) protein is Large ribosomal subunit protein uL5.